A 359-amino-acid chain; its full sequence is Photosystem II protein D1 1 (359 aa).

A run of 3 helical transmembrane segments spans residues 29 to 46 (YVGW…AATI), 118 to 133 (HFLI…EWEL), and 142 to 156 (WICV…AASA). His118 is a chlorophyll a binding site. Position 126 (Tyr126) interacts with pheophytin a. Positions 170 and 189 each coordinate [CaMn4O5] cluster. A helical membrane pass occupies residues 197 to 218 (FHMLGVAGVFGGSLFSAMHGSL). A chlorophyll a-binding site is contributed by His198. A quinone is bound by residues His215 and 264–265 (SF). Fe cation is bound at residue His215. His272 is a binding site for Fe cation. A helical membrane pass occupies residues 274 to 288 (FLAAWPVVGIWFTAL). [CaMn4O5] cluster contacts are provided by His332, Glu333, Asp342, and Ala344. Residues 345-359 (AAESTPVALQAPAIG) constitute a propeptide that is removed on maturation.

Belongs to the reaction center PufL/M/PsbA/D family. As to quaternary structure, PSII is composed of 1 copy each of membrane proteins PsbA, PsbB, PsbC, PsbD, PsbE, PsbF, PsbH, PsbI, PsbJ, PsbK, PsbL, PsbM, PsbT, PsbX, PsbY, PsbZ, Psb30/Ycf12, peripheral proteins PsbO, CyanoQ (PsbQ), PsbU, PsbV and a large number of cofactors. It forms dimeric complexes. Requires The D1/D2 heterodimer binds P680, chlorophylls that are the primary electron donor of PSII, and subsequent electron acceptors. It shares a non-heme iron and each subunit binds pheophytin, quinone, additional chlorophylls, carotenoids and lipids. D1 provides most of the ligands for the Mn4-Ca-O5 cluster of the oxygen-evolving complex (OEC). There is also a Cl(-1) ion associated with D1 and D2, which is required for oxygen evolution. The PSII complex binds additional chlorophylls, carotenoids and specific lipids. as cofactor. In terms of processing, tyr-161 forms a radical intermediate that is referred to as redox-active TyrZ, YZ or Y-Z. C-terminally processed by CtpA; processing is essential to allow assembly of the oxygen-evolving complex and thus photosynthetic growth.

The protein localises to the cellular thylakoid membrane. The enzyme catalyses 2 a plastoquinone + 4 hnu + 2 H2O = 2 a plastoquinol + O2. Photosystem II (PSII) is a light-driven water:plastoquinone oxidoreductase that uses light energy to abstract electrons from H(2)O, generating O(2) and a proton gradient subsequently used for ATP formation. It consists of a core antenna complex that captures photons, and an electron transfer chain that converts photonic excitation into a charge separation. The D1/D2 (PsbA/PsbD) reaction center heterodimer binds P680, the primary electron donor of PSII as well as several subsequent electron acceptors. This chain is Photosystem II protein D1 1, found in Parasynechococcus marenigrum (strain WH8102).